A 678-amino-acid chain; its full sequence is DNA gyrase subunit B (678 aa).

The 115-residue stretch at 456–570 (SELYVVEGDS…HGYVFLAQPP (115 aa)) folds into the Toprim domain. Residues Glu462, Asp535, and Asp537 each coordinate Mg(2+).

This sequence belongs to the type II topoisomerase GyrB family. In terms of assembly, heterotetramer, composed of two GyrA and two GyrB chains. In the heterotetramer, GyrA contains the active site tyrosine that forms a transient covalent intermediate with the DNA, while GyrB binds cofactors catalyzes ATP hydrolysis. It depends on Mg(2+) as a cofactor. Requires Mn(2+) as cofactor. Ca(2+) is required as a cofactor.

The protein localises to the cytoplasm. The catalysed reaction is ATP-dependent breakage, passage and rejoining of double-stranded DNA.. DNA supercoiling is inhibited by fluoroquinolones; IC(50) 1 ug/ml for sitafloxacin. Functionally, a type II topoisomerase that negatively supercoils closed circular double-stranded (ds) DNA in an ATP-dependent manner to modulate DNA topology and maintain chromosomes in an underwound state. Negative supercoiling favors strand separation, and DNA replication, transcription, recombination and repair, all of which involve strand separation. Also able to catalyze the interconversion of other topological isomers of dsDNA rings, including catenanes and knotted rings. Type II topoisomerases break and join 2 DNA strands simultaneously in an ATP-dependent manner. This chain is DNA gyrase subunit B, found in Mycobacterium leprae (strain TN).